The following is an 82-amino-acid chain: RNA-binding protein GTNG_0100 (82 aa).

The protein belongs to the eukaryotic ribosomal protein eL8 family.

The protein is RNA-binding protein GTNG_0100 of Geobacillus thermodenitrificans (strain NG80-2).